We begin with the raw amino-acid sequence, 384 residues long: MASLRKTHPILKIVNDALIDLPAPSNISFWWNYGSLLFLCLIIQIATGLFLAMHYTSDITTAFSSVAHICRDVNYGWLIRNMHANGASFFFICLYLHIGRGLYYGSYLNKETWNVGVILFLLVMMTAFVGYVLPWGQMSFWGATVITNLLSAVPYVGNALVQWIWGGFSVDNATLTRFFAFHFLFPFVIAAAAVIHLLFLHETGSNNPAGVNSNADKISFHPYFSYKDLLGFALMLLALTSLALFTPNLLGDPDNFIPANPLVTPPHIKPEWYFLFAYAILRSIPNKLGGVLALLFSILVLMVVPILHTSVQRGLTFRPLSQMLFWTLVADVLILTWIGGMPVEHPFIIIGQVASVLYFMLFLVLMPLVSWLENKALRKPIELA.

Transmembrane regions (helical) follow at residues 33–53 (YGSL…FLAM), 77–98 (WLIR…YLHI), 113–133 (WNVG…GYVL), and 178–198 (FFAF…IHLL). 2 residues coordinate heme b: His83 and His97. 2 residues coordinate heme b: His182 and His196. His201 contacts a ubiquinone. Transmembrane regions (helical) follow at residues 226 to 246 (YKDL…ALFT), 288 to 308 (LGGV…PILH), 320 to 340 (LSQM…WIGG), and 347 to 367 (FIII…VLMP).

Belongs to the cytochrome b family. The cytochrome bc1 complex contains 3 respiratory subunits (MT-CYB, CYC1 and UQCRFS1), 2 core proteins (UQCRC1 and UQCRC2) and probably 6 low-molecular weight proteins. It depends on heme b as a cofactor.

The protein resides in the mitochondrion inner membrane. Component of the ubiquinol-cytochrome c reductase complex (complex III or cytochrome b-c1 complex) that is part of the mitochondrial respiratory chain. The b-c1 complex mediates electron transfer from ubiquinol to cytochrome c. Contributes to the generation of a proton gradient across the mitochondrial membrane that is then used for ATP synthesis. The protein is Cytochrome b (mt-cyb) of Anoplogaster cornuta (Common fangtooth).